A 40-amino-acid polypeptide reads, in one-letter code: MADTTGRIPLWLIGTVAGIPVIGSVGVFFYGSYSGLGSSL.

Residues 8–28 (IPLWLIGTVAGIPVIGSVGVF) traverse the membrane as a helical segment.

Belongs to the PsbJ family. As to quaternary structure, PSII is composed of 1 copy each of membrane proteins PsbA, PsbB, PsbC, PsbD, PsbE, PsbF, PsbH, PsbI, PsbJ, PsbK, PsbL, PsbM, PsbT, PsbX, PsbY, PsbZ, Psb30/Ycf12, at least 3 peripheral proteins of the oxygen-evolving complex and a large number of cofactors. It forms dimeric complexes.

Its subcellular location is the plastid. It localises to the chloroplast thylakoid membrane. Functionally, one of the components of the core complex of photosystem II (PSII). PSII is a light-driven water:plastoquinone oxidoreductase that uses light energy to abstract electrons from H(2)O, generating O(2) and a proton gradient subsequently used for ATP formation. It consists of a core antenna complex that captures photons, and an electron transfer chain that converts photonic excitation into a charge separation. The protein is Photosystem II reaction center protein J of Acorus calamus (Sweet flag).